Reading from the N-terminus, the 249-residue chain is Probable transcriptional regulatory protein Meso_3192 (249 aa).

This sequence belongs to the TACO1 family.

The protein resides in the cytoplasm. The protein is Probable transcriptional regulatory protein Meso_3192 of Chelativorans sp. (strain BNC1).